The chain runs to 323 residues: 8-oxo-dGDP phosphatase NUDT18 (323 aa).

The region spanning 37–167 is the Nudix hydrolase domain; that stretch reads RLRKNVCYVV…DVLHLVELGA (131 aa). Position 58 (Leu58) interacts with Mg(2+). The Nudix box motif lies at 76–97; it reads GRMEPGETIVEAMQREVKEEAG.

Belongs to the Nudix hydrolase family. Requires Mn(2+) as cofactor. The cofactor is Mg(2+).

The catalysed reaction is 8-oxo-dGDP + H2O = 8-oxo-dGMP + phosphate + H(+). The enzyme catalyses 8-oxo-dADP + H2O = 8-oxo-dAMP + phosphate + H(+). It carries out the reaction 2-oxo-dADP + H2O = 2-oxo-dAMP + phosphate + H(+). It catalyses the reaction 8-oxo-GDP + H2O = 8-oxo-GMP + phosphate + H(+). Functionally, mediates the hydrolysis of oxidized nucleoside diphosphate derivatives. Hydrolyzes 8-oxo-7,8-dihydroguanine (8-oxo-Gua)-containing deoxyribo- and ribonucleoside diphosphates to the monophosphates. Hydrolyzes 8-oxo-dGDP and 8-oxo-GDP with the same efficiencies. Also hydrolyzes 8-OH-dADP and 2-OH-dADP. Exhibited no or minimal hydrolysis activity against 8-oxo-dGTP, 8-oxo-GTP, dGTP, GTP, dGDP and GDP. Probably removes oxidized guanine nucleotides from both the DNA and RNA precursor pools. The polypeptide is 8-oxo-dGDP phosphatase NUDT18 (Mus musculus (Mouse)).